A 471-amino-acid polypeptide reads, in one-letter code: 3-isopropylmalate dehydratase large subunit (471 aa).

[4Fe-4S] cluster-binding residues include cysteine 347, cysteine 407, and cysteine 410.

It belongs to the aconitase/IPM isomerase family. LeuC type 1 subfamily. Heterodimer of LeuC and LeuD. It depends on [4Fe-4S] cluster as a cofactor.

It catalyses the reaction (2R,3S)-3-isopropylmalate = (2S)-2-isopropylmalate. Its pathway is amino-acid biosynthesis; L-leucine biosynthesis; L-leucine from 3-methyl-2-oxobutanoate: step 2/4. Catalyzes the isomerization between 2-isopropylmalate and 3-isopropylmalate, via the formation of 2-isopropylmaleate. This is 3-isopropylmalate dehydratase large subunit from Buchnera aphidicola subsp. Baizongia pistaciae (strain Bp).